We begin with the raw amino-acid sequence, 242 residues long: DNA repair protein RecO (242 aa).

Belongs to the RecO family.

Involved in DNA repair and RecF pathway recombination. This is DNA repair protein RecO from Laribacter hongkongensis (strain HLHK9).